Here is a 495-residue protein sequence, read N- to C-terminus: Maintenance of mitochondrial morphology protein 1 (495 aa).

The Lumenal portion of the chain corresponds to 1-22; sequence MALQQHEPAPFAPQSSLSFTQG. The helical transmembrane segment at 23–43 threads the bilayer; that stretch reads FLLGQLSVVLLIGAFIKFFIF. Residues 44-495 are Cytoplasmic-facing; the sequence is GEAPPPPSRG…PVGTPGIPDN (452 aa). Disordered stretches follow at residues 63–94, 269–320, 382–428, and 440–495; these read YSSV…PSTS, ASTE…SPKS, WPRM…EPEG, and GLGA…IPDN. 2 stretches are compositionally biased toward polar residues: residues 65-74 and 82-94; these read SVYSPPQDSQ and STSN…PSTS. Positions 128–379 constitute an SMP-LTD domain; sequence QPESLDWFNV…EPRVQVVGLP (252 aa). Positions 271-289 are enriched in pro residues; it reads TEPPEPLQTPAGSPAPPTS. Residues 418 to 428 show a composition bias toward basic and acidic residues; that stretch reads FSDDHGREPEG. The span at 458 to 469 shows a compositional bias: polar residues; it reads RSSSMTRQQSGG.

This sequence belongs to the MMM1 family. In terms of assembly, homodimer. Component of the ER-mitochondria encounter structure (ERMES) or MDM complex, composed of mmm1, mdm10, mdm12 and mdm34. An MMM1 homodimer associates with one molecule of mdm12 on each side in a pairwise head-to-tail manner, and the SMP-LTD domains of mmm1 and mdm12 generate a continuous hydrophobic tunnel for phospholipid trafficking.

The protein resides in the endoplasmic reticulum membrane. Its function is as follows. Component of the ERMES/MDM complex, which serves as a molecular tether to connect the endoplasmic reticulum (ER) and mitochondria. Components of this complex are involved in the control of mitochondrial shape and protein biogenesis, and function in nonvesicular lipid trafficking between the ER and mitochondria. The mdm12-mmm1 subcomplex functions in the major beta-barrel assembly pathway that is responsible for biogenesis of all outer membrane beta-barrel proteins, and acts in a late step after the SAM complex. The mdm10-mdm12-mmm1 subcomplex further acts in the TOM40-specific pathway after the action of the mdm12-mmm1 complex. Essential for establishing and maintaining the structure of mitochondria and maintenance of mtDNA nucleoids. The polypeptide is Maintenance of mitochondrial morphology protein 1 (Penicillium rubens (strain ATCC 28089 / DSM 1075 / NRRL 1951 / Wisconsin 54-1255) (Penicillium chrysogenum)).